The sequence spans 99 residues: Aspartyl/glutamyl-tRNA(Asn/Gln) amidotransferase subunit C (99 aa).

This sequence belongs to the GatC family. In terms of assembly, heterotrimer of A, B and C subunits.

It catalyses the reaction L-glutamyl-tRNA(Gln) + L-glutamine + ATP + H2O = L-glutaminyl-tRNA(Gln) + L-glutamate + ADP + phosphate + H(+). The enzyme catalyses L-aspartyl-tRNA(Asn) + L-glutamine + ATP + H2O = L-asparaginyl-tRNA(Asn) + L-glutamate + ADP + phosphate + 2 H(+). In terms of biological role, allows the formation of correctly charged Asn-tRNA(Asn) or Gln-tRNA(Gln) through the transamidation of misacylated Asp-tRNA(Asn) or Glu-tRNA(Gln) in organisms which lack either or both of asparaginyl-tRNA or glutaminyl-tRNA synthetases. The reaction takes place in the presence of glutamine and ATP through an activated phospho-Asp-tRNA(Asn) or phospho-Glu-tRNA(Gln). This Sulfurihydrogenibium sp. (strain YO3AOP1) protein is Aspartyl/glutamyl-tRNA(Asn/Gln) amidotransferase subunit C.